The primary structure comprises 508 residues: Probable glycine dehydrogenase (decarboxylating) subunit 2 (508 aa).

Lys277 is modified (N6-(pyridoxal phosphate)lysine).

The protein belongs to the GcvP family. C-terminal subunit subfamily. As to quaternary structure, the glycine cleavage system is composed of four proteins: P, T, L and H. In this organism, the P 'protein' is a heterodimer of two subunits. Requires pyridoxal 5'-phosphate as cofactor.

The enzyme catalyses N(6)-[(R)-lipoyl]-L-lysyl-[glycine-cleavage complex H protein] + glycine + H(+) = N(6)-[(R)-S(8)-aminomethyldihydrolipoyl]-L-lysyl-[glycine-cleavage complex H protein] + CO2. Functionally, the glycine cleavage system catalyzes the degradation of glycine. The P protein binds the alpha-amino group of glycine through its pyridoxal phosphate cofactor; CO(2) is released and the remaining methylamine moiety is then transferred to the lipoamide cofactor of the H protein. The polypeptide is Probable glycine dehydrogenase (decarboxylating) subunit 2 (Saccharolobus solfataricus (strain ATCC 35092 / DSM 1617 / JCM 11322 / P2) (Sulfolobus solfataricus)).